We begin with the raw amino-acid sequence, 263 residues long: Chromosomal replication initiator protein DnaA (263 aa).

A region of interest (domain I, interacts with DnaA modulators) is located at residue Asp1. A region of interest (domain II) is located at residue Asp1. Residues 1–177 are domain III, AAA+ region; the sequence is DSGLGKTHLL…GIINKIEFSI (177 aa). ATP contacts are provided by Gly3, Gly5, Lys6, and Thr7. Residues 178–263 form a domain IV, binds dsDNA region; that stretch reads IQDNSAAPKI…KNYSEIGVAF (86 aa).

The protein belongs to the DnaA family. As to quaternary structure, oligomerizes as a right-handed, spiral filament on DNA at oriC.

It is found in the cytoplasm. Its function is as follows. Plays an essential role in the initiation and regulation of chromosomal replication. ATP-DnaA binds to the origin of replication (oriC) to initiate formation of the DNA replication initiation complex once per cell cycle. Binds the DnaA box (a 9 base pair repeat at the origin) and separates the double-stranded (ds)DNA. Forms a right-handed helical filament on oriC DNA; dsDNA binds to the exterior of the filament while single-stranded (ss)DNA is stabiized in the filament's interior. The ATP-DnaA-oriC complex binds and stabilizes one strand of the AT-rich DNA unwinding element (DUE), permitting loading of DNA polymerase. After initiation quickly degrades to an ADP-DnaA complex that is not apt for DNA replication. Binds acidic phospholipids. This is Chromosomal replication initiator protein DnaA from Spiroplasma apis.